The following is a 258-amino-acid chain: 2-oxo-tetronate isomerase (258 aa).

Catalysis depends on Glu-143, which acts as the Proton donor/acceptor. 4 residues coordinate Mg(2+): Glu-143, Asp-178, Gln-204, and Glu-240. Glu-240 (proton donor/acceptor) is an active-site residue.

Belongs to the hyi family. OtnI subfamily.

The enzyme catalyses 2-dehydro-L-erythronate = 3-dehydro-L-erythronate. The catalysed reaction is 2-dehydro-D-erythronate = 3-dehydro-D-erythronate. In terms of biological role, catalyzes the isomerization of 2-oxo-tetronate to 3-oxo-tetronate. This is 2-oxo-tetronate isomerase from Haemophilus influenzae (strain ATCC 51907 / DSM 11121 / KW20 / Rd).